A 271-amino-acid polypeptide reads, in one-letter code: Putative hydro-lyase OCAR_7359/OCA5_c07590 (271 aa).

It belongs to the D-glutamate cyclase family.

The protein is Putative hydro-lyase OCAR_7359/OCA5_c07590 of Afipia carboxidovorans (strain ATCC 49405 / DSM 1227 / KCTC 32145 / OM5) (Oligotropha carboxidovorans).